The primary structure comprises 495 residues: Angiopoietin-2 (495 aa).

Residues 1–18 (MWQIVFFTLSCDLVRAAA) form the signal peptide. N-linked (GlcNAc...) asparagine glycosylation is found at Asn-88, Asn-118, Asn-132, Asn-150, Asn-239, and Asn-303. Residues 165–247 (STNKLEKQIL…VNNSVLQKQQ (83 aa)) are a coiled coil. Positions 274–494 (KEEQIIYRDC…GTTMMIRPAD (221 aa)) constitute a Fibrinogen C-terminal domain. A disulfide bridge connects residues Cys-283 and Cys-312. Asp-428, Asp-430, Cys-432, and Cys-434 together coordinate Ca(2+). 2 disulfides stabilise this stretch: Cys-432-Cys-434 and Cys-436-Cys-449.

In terms of assembly, interacts with TEK/TIE2, competing for the same binding site as ANGPT1. Interacts with ITGA5. Interacts with SVEP1/polydom. Interacts with THBD; this interaction significantly inhibits the generation of activated PC and TAFIa/CPB2 by the thrombin/thrombomodulin complex.

The protein resides in the secreted. Functionally, binds to TEK/TIE2, competing for the ANGPT1 binding site, and modulating ANGPT1 signaling. Can induce tyrosine phosphorylation of TEK/TIE2 in the absence of ANGPT1. In the absence of angiogenic inducers, such as VEGF, ANGPT2-mediated loosening of cell-matrix contacts may induce endothelial cell apoptosis with consequent vascular regression. In concert with VEGF, it may facilitate endothelial cell migration and proliferation, thus serving as a permissive angiogenic signal. Involved in the regulation of lymphangiogenesis. This chain is Angiopoietin-2 (ANGPT2), found in Canis lupus familiaris (Dog).